The following is a 161-amino-acid chain: Ferredoxin/F(420)H(2)-dependent CoB-CoM heterodisulfide reductase subunit C (161 aa).

4Fe-4S ferredoxin-type domains lie at 10–40 and 51–82; these read KAEG…LNTR and AAVL…TDAI. [4Fe-4S] cluster is bound by residues Cys19, Cys22, Cys25, Cys29, Cys62, Cys65, Cys68, and Cys72.

This sequence belongs to the HdrC family. The ferredoxin/F(420)H(2)-dependent CoB-CoM heterodisulfide reductase is composed of three subunits; HdrA2, HdrB2 and HdrC2. The cofactor is [4Fe-4S] cluster.

The protein localises to the cytoplasm. The enzyme catalyses coenzyme B + coenzyme M + 2 oxidized [2Fe-2S]-[ferredoxin] = coenzyme M-coenzyme B heterodisulfide + 2 reduced [2Fe-2S]-[ferredoxin] + 2 H(+). The catalysed reaction is coenzyme B + 2 oxidized coenzyme F420-(gamma-L-Glu)(n) + coenzyme M + 2 reduced [2Fe-2S]-[ferredoxin] + 4 H(+) = coenzyme M-coenzyme B heterodisulfide + 2 reduced coenzyme F420-(gamma-L-Glu)(n) + 2 oxidized [2Fe-2S]-[ferredoxin]. It functions in the pathway cofactor metabolism; coenzyme M-coenzyme B heterodisulfide reduction; coenzyme B and coenzyme M from coenzyme M-coenzyme B heterodisulfide: step 1/1. Part of a complex that catalyzes the reversible reduction of CoM-S-S-CoB to the thiol-coenzymes H-S-CoM (coenzyme M) and H-S-CoB (coenzyme B). Catalyzes the transfer of electrons from ferredoxin to CoM-S-S-CoB during methanogenesis from acetate. Electrons transfer from ferredoxin to CoM-S-S-CoB via HdrA2, HdrC2 and HdrB2. In addition, the complex can use electron bifurcation to direct electron pairs from reduced coenzyme F420 towards the reduction of both ferredoxin and CoB-CoM heterodisulfide. This activity may take place during Fe(III)-dependent anaerobic methane oxidation. This chain is Ferredoxin/F(420)H(2)-dependent CoB-CoM heterodisulfide reductase subunit C, found in Methanosarcina acetivorans (strain ATCC 35395 / DSM 2834 / JCM 12185 / C2A).